Consider the following 287-residue polypeptide: Orotidine 5'-phosphate decarboxylase (287 aa).

Lys97 (proton donor) is an active-site residue.

This sequence belongs to the OMP decarboxylase family. Type 2 subfamily.

It carries out the reaction orotidine 5'-phosphate + H(+) = UMP + CO2. The protein operates within pyrimidine metabolism; UMP biosynthesis via de novo pathway; UMP from orotate: step 2/2. The protein is Orotidine 5'-phosphate decarboxylase (pyrF) of Clostridium perfringens (strain 13 / Type A).